The following is a 1022-amino-acid chain: Sodium-dependent transporter snf-12 (1022 aa).

The Cytoplasmic portion of the chain corresponds to 1–165; the sequence is MNGEWKSALR…RRELWRTQKD (165 aa). The chain crosses the membrane as a helical span at residues 166-185; the sequence is FFLSCLGFMVGVGHTMRFPA. The Extracellular portion of the chain corresponds to 186–192; that stretch reads KVYQHGG. The chain crosses the membrane as a helical span at residues 193–213; that stretch reads GVFFIPYLFSLIFFGLPLVFL. Over 214–241 the chain is Cytoplasmic; it reads HLSLGQYTGQAANTAFQRLMPIGSGVGW. The chain crosses the membrane as a helical span at residues 242 to 262; it reads ALVVIAIPVAVYYNIIVAWAI. Residues 263–337 lie on the Extracellular side of the membrane; that stretch reads HYFFQSAKGL…DFALGPLQSH (75 aa). A helical transmembrane segment spans residues 338–358; the sequence is LVLSLAAAWLLVFFGVFKGLG. Position 359 (Ser-359) is a topological domain, cytoplasmic. Residues 360–380 form a helical membrane-spanning segment; that stretch reads IAQTMNVTATVPYLLLSILLL. The Extracellular portion of the chain corresponds to 381–412; the sequence is RGISLPGANKGLTFLFTVDSTKLWKWQIWKSA. A helical transmembrane segment spans residues 413–433; it reads AEQVFYELGIDAGPLISMAAF. Topologically, residues 434–444 are cytoplasmic; sequence SRYRNNIYRDS. The chain crosses the membrane as a helical span at residues 445–465; sequence VLLVIMDALTSCLSGMVIFSF. Over 466-498 the chain is Extracellular; it reads VGFIASESNSNVNDVLKHDPLYLSFTVYPGVTS. Residues 499–519 form a helical membrane-spanning segment; the sequence is FMYWGGLWATLFFGMLVLAAI. The Cytoplasmic portion of the chain corresponds to 520–550; the sequence is DAEFAWLEMIASAFMNHFSMKNKAVENRLLA. A helical transmembrane segment spans residues 551 to 571; the sequence is FLCLAGFFLGLPLCAQGGIFV. The Extracellular segment spans residues 572–584; that stretch reads FHAIENLNANWNS. The helical transmembrane segment at 585 to 605 threads the bilayer; sequence FSLALLSVAIVCYVYGIDNYL. At 606–641 the chain is on the cytoplasmic side; sequence TDISAMLRVPRIQISKATRLKEKLIYFFGPGGIYIK. The chain crosses the membrane as a helical span at residues 642–662; sequence FSLCFICPVILTVLLVASVLG. The Extracellular portion of the chain corresponds to 663–677; sequence YQRISFAGRPIPIDY. A helical transmembrane segment spans residues 678–698; that stretch reads EIVAWIVMIGPLLVVPLVAFM. The Cytoplasmic segment spans residues 699-1022; sequence QIRQIRNEGK…RPKPIDMPPK (324 aa). 2 disordered regions span residues 867–948 and 995–1022; these read RIPN…SSDD and IYDQ…MPPK. The span at 893–907 shows a compositional bias: pro residues; that stretch reads SDPPVPTSPLPPPPK. Residues 933–943 show a composition bias toward low complexity; the sequence is DDSPSISNSSD.

Belongs to the sodium:neurotransmitter symporter (SNF) (TC 2.A.22) family. In terms of assembly, may interact with STAT family transcription factor sta-2; the interaction is probably direct.

Its subcellular location is the membrane. The protein resides in the cytoplasm. It is found in the vesicle. Its function is as follows. Probably mediates sodium-dependent uptake of unknown small molecule(s). By positively modulating expression, in the epidermis, of antimicrobial peptides such as nlp-29, plays a role in resistance to fungal infection and in the response to physical wounding and phorbol ester PMA treatment. Role in response to wounding of the epidermis may be facilitated by recruitment of snf-12 to the wound site by microtubule-dependent vesicle trafficking. Functions cell autonomously in the epidermis, in concert with STAT transcription factor sta-2, probably acting at vesicular membranes, downstream of a p38 MAPK/pmk-1 pathway. This chain is Sodium-dependent transporter snf-12, found in Caenorhabditis elegans.